A 232-amino-acid polypeptide reads, in one-letter code: 6-hydroxymethyl-7,8-dihydropterin pyrophosphokinase (232 aa).

The protein belongs to the archaeal 6-HMPDK family. Mg(2+) serves as cofactor.

The catalysed reaction is 6-hydroxymethyl-7,8-dihydropterin + ATP = (7,8-dihydropterin-6-yl)methyl diphosphate + AMP + H(+). The protein operates within cofactor biosynthesis; 5,6,7,8-tetrahydromethanopterin biosynthesis. Its function is as follows. Catalyzes the transfer of diphosphate from ATP to 6-hydroxymethyl-7,8-dihydropterin (6-HMD), leading to 6-hydroxymethyl-7,8-dihydropterin diphosphate (6-HMDP). The protein is 6-hydroxymethyl-7,8-dihydropterin pyrophosphokinase of Methanothermobacter thermautotrophicus (strain ATCC 29096 / DSM 1053 / JCM 10044 / NBRC 100330 / Delta H) (Methanobacterium thermoautotrophicum).